Reading from the N-terminus, the 237-residue chain is uncharacterized protein (237 aa).

Transmembrane regions (helical) follow at residues 19 to 39 (ILNGIWLITALGLVATAGLAW), 51 to 71 (YDSPPMYVAIGLLLLCMYGLS), 81 to 101 (IAGVIYLFLLSLVAIVVASLV), 106 to 126 (IIIVFSTAGAMFLISMLAGLL), 136 to 156 (FIIMMTLTGLALVIIVNAALM), 159 to 179 (RPIWIISCLMIVLWSGIISHG), and 209 to 229 (LYYYFIGFFGILAAIAITLVW).

The protein localises to the cell membrane. This is an uncharacterized protein from Escherichia coli (strain K12).